Consider the following 475-residue polypeptide: uncharacterized protein (475 aa).

A coiled-coil region spans residues 185–244 (EISVSAISEQLASLMERVDKLEKMNAALEEENKQLKKEREATIKSVKKEAKKIKQEKPQI).

This is an uncharacterized protein from Nora virus.